The chain runs to 499 residues: MTASTIKALSAQLAAKEVSAEELARHYLSRIEAGAHLNAFTHVDAEATLAQARAADARIAAGNAAPLTGVPIAHKDVFVTRGWRATAGSKMLGNYVSPFDATVVERLGAAGMVTLGKTNMDEFAMGSSNENSAFGAVKNPWNLEHVPGGSSGGSAAAVAADLAPAATGTDTGGSIRQPASFSGITGIKPTYGRVSRYGMIAFASSLDQGGPMARTAEDCALLLSAMAGFDPRDSTSLEPGRGGDVEDFGRLLGQPLQGADAARPLAGLRIGLPKEYFGEGLADDVRTTVRAALAELEKLGATLVDISLPKTELSIPTYYVIAPAEASSNLSRFDGVRYGHRAAEYRDLADMYRKSRAEGFGWEVKRRILVGAYVLSHGYYDAYYLQAQKIRRIIAQDFQNVLAGANRQCDVIMGPVAPTVAWKLGEKTSDPVQMYLADIFTLSTSLAGLPGMSVPAGFGANGLPVGLQIIGNYFEEARMLQIAHAFQQATDWHHRQPAA.

Active-site charge relay system residues include lysine 75 and serine 150. Serine 174 (acyl-ester intermediate) is an active-site residue.

This sequence belongs to the amidase family. GatA subfamily. As to quaternary structure, heterotrimer of A, B and C subunits.

It catalyses the reaction L-glutamyl-tRNA(Gln) + L-glutamine + ATP + H2O = L-glutaminyl-tRNA(Gln) + L-glutamate + ADP + phosphate + H(+). In terms of biological role, allows the formation of correctly charged Gln-tRNA(Gln) through the transamidation of misacylated Glu-tRNA(Gln) in organisms which lack glutaminyl-tRNA synthetase. The reaction takes place in the presence of glutamine and ATP through an activated gamma-phospho-Glu-tRNA(Gln). This is Glutamyl-tRNA(Gln) amidotransferase subunit A from Ralstonia pickettii (strain 12J).